The following is a 62-amino-acid chain: Large ribosomal subunit protein bL28 (62 aa).

Belongs to the bacterial ribosomal protein bL28 family.

In Thermobifida fusca (strain YX), this protein is Large ribosomal subunit protein bL28.